A 1242-amino-acid chain; its full sequence is DNA-directed RNA polymerase RPB2 homolog (1242 aa).

Residues Cys1180–Cys1201 form a C4-type zinc finger.

This sequence belongs to the RNA polymerase beta chain family. Part of the viral DNA-directed RNA polymerase that consists of 8 polII-like subunits (RPB1, RPB2, RPB3, RPB5, RPB6, RPB7, RPB9, RPB10), a capping enzyme and a termination factor.

Its subcellular location is the host cytoplasm. The protein resides in the virion. It catalyses the reaction RNA(n) + a ribonucleoside 5'-triphosphate = RNA(n+1) + diphosphate. Catalytic component of the DNA-directed RNA polymerase (RNAP) that catalyzes the transcription in the cytoplasm of viral DNA into RNA using the four ribonucleoside triphosphates as substrates. Forms the polymerase active center together with RPB1. Part of the core element with the central large cleft, the clamp element that moves to open and close the cleft and the jaws that are thought to grab the incoming DNA template. The polypeptide is DNA-directed RNA polymerase RPB2 homolog (African swine fever virus (isolate Tick/Malawi/Lil 20-1/1983) (ASFV)).